A 448-amino-acid chain; its full sequence is uncharacterized protein (448 aa).

In terms of tissue distribution, component of the acid-insoluble and acid-soluble organic matrix of the aragonitic skeleton (at protein level).

The protein resides in the secreted. This is an uncharacterized protein from Acropora millepora (Staghorn coral).